A 299-amino-acid chain; its full sequence is tRNA dimethylallyltransferase (299 aa).

13-20 (GPTASGKT) provides a ligand contact to ATP. 15–20 (TASGKT) contributes to the substrate binding site. An interaction with substrate tRNA region spans residues 38–41 (DSRQ).

This sequence belongs to the IPP transferase family. As to quaternary structure, monomer. The cofactor is Mg(2+).

The enzyme catalyses adenosine(37) in tRNA + dimethylallyl diphosphate = N(6)-dimethylallyladenosine(37) in tRNA + diphosphate. Catalyzes the transfer of a dimethylallyl group onto the adenine at position 37 in tRNAs that read codons beginning with uridine, leading to the formation of N6-(dimethylallyl)adenosine (i(6)A). The protein is tRNA dimethylallyltransferase of Prochlorococcus marinus (strain NATL2A).